Here is a 94-residue protein sequence, read N- to C-terminus: Small ribosomal subunit protein uS19 (94 aa).

The protein belongs to the universal ribosomal protein uS19 family.

Functionally, protein S19 forms a complex with S13 that binds strongly to the 16S ribosomal RNA. The protein is Small ribosomal subunit protein uS19 of Natranaerobius thermophilus (strain ATCC BAA-1301 / DSM 18059 / JW/NM-WN-LF).